Here is a 476-residue protein sequence, read N- to C-terminus: Aspartyl/glutamyl-tRNA(Asn/Gln) amidotransferase subunit B (476 aa).

Belongs to the GatB/GatE family. GatB subfamily. Heterotrimer of A, B and C subunits.

The enzyme catalyses L-glutamyl-tRNA(Gln) + L-glutamine + ATP + H2O = L-glutaminyl-tRNA(Gln) + L-glutamate + ADP + phosphate + H(+). It carries out the reaction L-aspartyl-tRNA(Asn) + L-glutamine + ATP + H2O = L-asparaginyl-tRNA(Asn) + L-glutamate + ADP + phosphate + 2 H(+). Allows the formation of correctly charged Asn-tRNA(Asn) or Gln-tRNA(Gln) through the transamidation of misacylated Asp-tRNA(Asn) or Glu-tRNA(Gln) in organisms which lack either or both of asparaginyl-tRNA or glutaminyl-tRNA synthetases. The reaction takes place in the presence of glutamine and ATP through an activated phospho-Asp-tRNA(Asn) or phospho-Glu-tRNA(Gln). This Moorella thermoacetica (strain ATCC 39073 / JCM 9320) protein is Aspartyl/glutamyl-tRNA(Asn/Gln) amidotransferase subunit B.